A 72-amino-acid chain; its full sequence is Protein CYSTEINE-RICH TRANSMEMBRANE MODULE 9 (72 aa).

Residues Met-1 to Tyr-22 are compositionally biased toward polar residues. Residues Met-1 to Glu-46 are disordered. A helical transmembrane segment spans residues Ser-49 to Cys-65.

This sequence belongs to the CYSTM1 family. Heterodimers. Interacts with WIH1/CYSTM13. Mostly expressed in roots and flowers and, to a lower extent, in stems, siliques and leaves.

It is found in the cell membrane. Its subcellular location is the nucleus. In terms of biological role, involved in resistance to abiotic stress. The chain is Protein CYSTEINE-RICH TRANSMEMBRANE MODULE 9 from Arabidopsis thaliana (Mouse-ear cress).